The sequence spans 400 residues: Formate-dependent phosphoribosylglycinamide formyltransferase (400 aa).

N(1)-(5-phospho-beta-D-ribosyl)glycinamide-binding positions include 22–23 and Glu-82; that span reads EL. ATP contacts are provided by residues Arg-115, Lys-156, 161-166, 196-199, and Glu-204; these read SSGKGQ and EGFI. In terms of domain architecture, ATP-grasp spans 120–309; the sequence is RLAAETLGLP…EFALHARAIL (190 aa). Mg(2+) contacts are provided by Glu-268 and Glu-280. N(1)-(5-phospho-beta-D-ribosyl)glycinamide-binding positions include Asp-287, Lys-361, and 368-369; that span reads RR.

It belongs to the PurK/PurT family. In terms of assembly, homodimer.

The catalysed reaction is N(1)-(5-phospho-beta-D-ribosyl)glycinamide + formate + ATP = N(2)-formyl-N(1)-(5-phospho-beta-D-ribosyl)glycinamide + ADP + phosphate + H(+). It participates in purine metabolism; IMP biosynthesis via de novo pathway; N(2)-formyl-N(1)-(5-phospho-D-ribosyl)glycinamide from N(1)-(5-phospho-D-ribosyl)glycinamide (formate route): step 1/1. Its function is as follows. Involved in the de novo purine biosynthesis. Catalyzes the transfer of formate to 5-phospho-ribosyl-glycinamide (GAR), producing 5-phospho-ribosyl-N-formylglycinamide (FGAR). Formate is provided by PurU via hydrolysis of 10-formyl-tetrahydrofolate. In Xanthomonas axonopodis pv. citri (strain 306), this protein is Formate-dependent phosphoribosylglycinamide formyltransferase.